The sequence spans 311 residues: Long form salivary protein D7L1 (311 aa).

The signal sequence occupies residues 1 to 16 (MKALIFLGAIIAGVLS). Intrachain disulfides connect Cys-34–Cys-67 and Cys-63–Cys-120. Ser-146, Arg-149, Tyr-153, and Lys-160 together coordinate ADP. Cystine bridges form between Cys-170–Cys-202, Cys-183–Cys-311, and Cys-244–Cys-258. ADP is bound by residues Asn-281, Tyr-282, and Ser-283.

Belongs to the PBP/GOBP family. In terms of tissue distribution, distal lateral and medial lobes of female mosquito salivary gland (at protein level). Expressed in the head and thorax of the female mosquitoes, where the salivary glands are located. Expressed in salivary gland. Not detected in the female mosquito abdomen. Not detected in the male mosquito tissues.

It localises to the secreted. In terms of biological role, modulates blood feeding of female mosquitoes on vertebrate species by binding and sequestering different mediators involved in the host response. Binds adenine, adenosine, AMP, ADP and ATP, with the highest affinity to ATP and ADP. Inhibits agonist-induced platelet aggregation and hemostasis. This chain is Long form salivary protein D7L1, found in Culex quinquefasciatus (Southern house mosquito).